The chain runs to 509 residues: Dihydrolipoyl dehydrogenase, mitochondrial (509 aa).

Residues 1-35 (MQSWSRVYCSLVKRGHFSRISHGLQGVSVVPLRTY) constitute a mitochondrion transit peptide. Lys66 bears the N6-acetyllysine; alternate mark. The residue at position 66 (Lys66) is an N6-succinyllysine; alternate. FAD is bound by residues 71–80 (EKNETLGGTC) and Lys89. Residues Cys80 and Cys85 are joined by a disulfide bond. An N6-acetyllysine; alternate mark is found at Lys104, Lys122, Lys132, and Lys143. N6-succinyllysine; alternate is present on residues Lys104, Lys122, Lys132, and Lys143. Residue Gly154 coordinates FAD. N6-succinyllysine is present on residues Lys159 and Lys166. 183–185 (TGS) lines the FAD pocket. Residues 220-227 (GAGVIGVE) and Glu243 each bind NAD(+). N6-succinyllysine is present on residues Lys273 and Lys277. Val278 serves as a coordination point for NAD(+). Ser285 and Ser297 each carry phosphoserine. NAD(+) is bound at residue Gly314. Lys346 carries the post-translational modification N6-acetyllysine. FAD contacts are provided by residues Asp355 and 361 to 364 (MLAH). An N6-acetyllysine; alternate modification is found at Lys410. Lys410 bears the N6-succinyllysine; alternate mark. Lys417 and Lys420 each carry N6-acetyllysine. N6-succinyllysine is present on Lys430. His487 serves as the catalytic Proton acceptor. Residue Lys505 is modified to N6-acetyllysine; alternate. Lys505 carries the post-translational modification N6-succinyllysine; alternate.

Belongs to the class-I pyridine nucleotide-disulfide oxidoreductase family. In terms of assembly, homodimer. Part of the multimeric pyruvate dehydrogenase complex that contains multiple copies of pyruvate dehydrogenase (subunits PDHA (PDHA1 or PDHA2) and PDHB, E1), dihydrolipoamide acetyltransferase (DLAT, E2) and lipoamide dehydrogenase (DLD, E3). These subunits are bound to an inner core composed of about 48 DLAT and 12 PDHX molecules (by non covalent bonds). The 2-oxoglutarate dehydrogenase complex is composed of OGDH (2-oxoglutarate dehydrogenase; E1), DLST (dihydrolipoamide succinyltransferase; E2), DLD (dihydrolipoamide dehydrogenase; E3) and the assembly factor KGD4. It contains multiple copies of the three enzymatic components (E1, E2 and E3). In the nucleus, the 2-oxoglutarate dehydrogenase complex associates with KAT2A. Interacts with PDHX. Requires FAD as cofactor. Post-translationally, tyrosine phosphorylated.

Its subcellular location is the mitochondrion matrix. The protein localises to the nucleus. It localises to the cell projection. The protein resides in the cilium. It is found in the flagellum. Its subcellular location is the cytoplasmic vesicle. The protein localises to the secretory vesicle. It localises to the acrosome. It catalyses the reaction N(6)-[(R)-dihydrolipoyl]-L-lysyl-[protein] + NAD(+) = N(6)-[(R)-lipoyl]-L-lysyl-[protein] + NADH + H(+). Functionally, lipoamide dehydrogenase is a component of the glycine cleavage system as well as an E3 component of three alpha-ketoacid dehydrogenase complexes (pyruvate-, alpha-ketoglutarate-, and branched-chain amino acid-dehydrogenase complex). The 2-oxoglutarate dehydrogenase complex is mainly active in the mitochondrion. A fraction of the 2-oxoglutarate dehydrogenase complex also localizes in the nucleus and is required for lysine succinylation of histones: associates with KAT2A on chromatin and provides succinyl-CoA to histone succinyltransferase KAT2A. In monomeric form may have additional moonlighting function as serine protease. Involved in the hyperactivation of spermatazoa during capacitation and in the spermatazoal acrosome reaction. In Bos taurus (Bovine), this protein is Dihydrolipoyl dehydrogenase, mitochondrial (DLD).